We begin with the raw amino-acid sequence, 461 residues long: Type IV secretion system protein PtlD homolog (461 aa).

A signal peptide spans Met-1–Ala-24. 5 helical membrane passes run Leu-118–Leu-138, Trp-232–Ser-252, Leu-253–Val-273, Ala-294–Gly-314, and Met-333–Ala-353. A compositionally biased stretch (low complexity) spans Ala-376–Ala-411. Residues Ala-376–Pro-461 form a disordered region. Over residues Val-439 to Val-453 the composition is skewed to basic and acidic residues.

It localises to the cell membrane. The sequence is that of Type IV secretion system protein PtlD homolog (ptlD) from Bordetella bronchiseptica (strain ATCC BAA-588 / NCTC 13252 / RB50) (Alcaligenes bronchisepticus).